Here is a 349-residue protein sequence, read N- to C-terminus: Isopentenyl-diphosphate delta-isomerase (349 aa).

Substrate is bound at residue 6 to 7; sequence RK. FMN contacts are provided by residues 62–64, serine 93, and asparagine 122; that span reads AMT. Glutamine 152 is a substrate binding site. Glutamate 153 lines the Mg(2+) pocket. Residues lysine 184, threonine 214, 258–259, and 280–281 contribute to the FMN site; these read GG and AG.

Belongs to the IPP isomerase type 2 family. As to quaternary structure, homooctamer. Dimer of tetramers. Requires FMN as cofactor. It depends on NADPH as a cofactor. Mg(2+) is required as a cofactor.

It is found in the cytoplasm. It catalyses the reaction isopentenyl diphosphate = dimethylallyl diphosphate. Involved in the biosynthesis of isoprenoids. Catalyzes the 1,3-allylic rearrangement of the homoallylic substrate isopentenyl (IPP) to its allylic isomer, dimethylallyl diphosphate (DMAPP). In Bacillus licheniformis (strain ATCC 14580 / DSM 13 / JCM 2505 / CCUG 7422 / NBRC 12200 / NCIMB 9375 / NCTC 10341 / NRRL NRS-1264 / Gibson 46), this protein is Isopentenyl-diphosphate delta-isomerase.